The chain runs to 344 residues: L-rhamnose-proton symporter (344 aa).

Transmembrane regions (helical) follow at residues P4 to A24, W38 to L58, F68 to I88, M101 to L121, T137 to L157, L175 to A195, L214 to I234, L255 to F275, I290 to F310, and L324 to V344.

This sequence belongs to the L-rhamnose transporter (TC 2.A.7.6) family.

Its subcellular location is the cell inner membrane. The enzyme catalyses L-rhamnopyranose(in) + H(+)(in) = L-rhamnopyranose(out) + H(+)(out). Its function is as follows. Uptake of L-rhamnose across the cytoplasmic membrane with the concomitant transport of protons into the cell (symport system). The polypeptide is L-rhamnose-proton symporter (Pectobacterium atrosepticum (strain SCRI 1043 / ATCC BAA-672) (Erwinia carotovora subsp. atroseptica)).